Consider the following 244-residue polypeptide: tRNA pseudouridine synthase A (244 aa).

D52 acts as the Nucleophile in catalysis. Y110 contacts substrate.

This sequence belongs to the tRNA pseudouridine synthase TruA family. Homodimer.

It carries out the reaction uridine(38/39/40) in tRNA = pseudouridine(38/39/40) in tRNA. Functionally, formation of pseudouridine at positions 38, 39 and 40 in the anticodon stem and loop of transfer RNAs. This is tRNA pseudouridine synthase A from Geobacter sulfurreducens (strain ATCC 51573 / DSM 12127 / PCA).